The following is a 562-amino-acid chain: Delta-1-pyrroline-5-carboxylate dehydrogenase, mitochondrial (562 aa).

The N-terminal 23 residues, 1–23, are a transit peptide targeting the mitochondrion; it reads MLPLPSLRRSLLSHAWRGAGLRW. At Lys-30 the chain carries N6-succinyllysine. Ser-43 is modified (phosphoserine). N6-acetyllysine is present on Lys-51. Residues Lys-92, Lys-98, Lys-113, Lys-129, and Lys-174 each carry the N6-acetyllysine; alternate modification. Residues Lys-92, Lys-98, Lys-113, Lys-129, and Lys-174 each carry the N6-succinyllysine; alternate modification. NAD(+) contacts are provided by residues Ser-207, Lys-232, and 285-289; that span reads GSVPT. The active-site Proton acceptor is the Glu-313. Lys-317 carries the post-translational modification N6-acetyllysine. Lys-346 bears the N6-succinyllysine mark. Residue Cys-347 is the Nucleophile of the active site. The residue at position 357 (Lys-357) is an N6-acetyllysine; alternate. Lys-357 carries the post-translational modification N6-succinyllysine; alternate. Lys-364 and Lys-375 each carry N6-acetyllysine. Lys-394 carries the post-translational modification N6-succinyllysine. NAD(+) is bound at residue Glu-446. Lys-461 carries the N6-acetyllysine modification. Lys-508 is modified (N6-acetyllysine; alternate). N6-succinyllysine; alternate is present on Lys-508. A substrate-binding site is contributed by Ser-512. N6-acetyllysine occurs at positions 530 and 551.

This sequence belongs to the aldehyde dehydrogenase family. In terms of assembly, homodimer. In terms of processing, acetylation of Lys-98, Lys-113 and Lys-401 is observed in liver mitochondria from fasted mice but not from fed mice.

The protein resides in the mitochondrion matrix. The catalysed reaction is L-glutamate 5-semialdehyde + NAD(+) + H2O = L-glutamate + NADH + 2 H(+). Its pathway is amino-acid degradation; L-proline degradation into L-glutamate; L-glutamate from L-proline: step 2/2. In terms of biological role, irreversible conversion of delta-1-pyrroline-5-carboxylate (P5C), derived either from proline or ornithine, to glutamate. This is a necessary step in the pathway interconnecting the urea and tricarboxylic acid cycles. The preferred substrate is glutamic gamma-semialdehyde, other substrates include succinic, glutaric and adipic semialdehydes. The sequence is that of Delta-1-pyrroline-5-carboxylate dehydrogenase, mitochondrial (Aldh4a1) from Mus musculus (Mouse).